A 209-amino-acid chain; its full sequence is APC/C-CDH1 modulator 1 (209 aa).

Residues 1–38 (MISPSKKRTILSSKNINQKPRAVVKGNELRSPSKRRSQ) form a disordered region. Ser-48 carries the phosphoserine modification. Thr-161 is subject to Phosphothreonine. Ser-202 carries the post-translational modification Phosphoserine.

Interacts with CDH1, BMH1 and BMH2.

Functionally, negative regulator of GDH1, the activator protein that regulates the ubiquitin ligase activity and substrate specificity of the anaphase promoting complex/cyclosome (APC/C), and which is required for exit from mitosis, cytokinesis and formation of prereplicative complexes in G1. This Saccharomyces cerevisiae (strain ATCC 204508 / S288c) (Baker's yeast) protein is APC/C-CDH1 modulator 1 (ACM1).